We begin with the raw amino-acid sequence, 200 residues long: Probable GTP-binding protein EngB (200 aa).

Residues 22–194 (TLPEVAFVGR…WKEVLRLTLA (173 aa)) enclose the EngB-type G domain. GTP-binding positions include 30-37 (GRSNVGKS), 57-61 (GRTQL), 75-78 (DLPG), 142-145 (TKCD), and 173-175 (FSA). Residues Ser-37 and Thr-59 each contribute to the Mg(2+) site.

Belongs to the TRAFAC class TrmE-Era-EngA-EngB-Septin-like GTPase superfamily. EngB GTPase family. It depends on Mg(2+) as a cofactor.

Its function is as follows. Necessary for normal cell division and for the maintenance of normal septation. The polypeptide is Probable GTP-binding protein EngB (Pelobacter propionicus (strain DSM 2379 / NBRC 103807 / OttBd1)).